The following is a 171-amino-acid chain: Shikimate kinase (171 aa).

Position 14 to 19 (14 to 19 (GAGKST)) interacts with ATP. Position 18 (Ser18) interacts with Mg(2+). Substrate-binding residues include Asp36, Arg60, and Gly82. Position 120 (Arg120) interacts with ATP. Residue Arg139 coordinates substrate. Gln156 contacts ATP.

The protein belongs to the shikimate kinase family. Monomer. Requires Mg(2+) as cofactor.

The protein localises to the cytoplasm. The catalysed reaction is shikimate + ATP = 3-phosphoshikimate + ADP + H(+). The protein operates within metabolic intermediate biosynthesis; chorismate biosynthesis; chorismate from D-erythrose 4-phosphate and phosphoenolpyruvate: step 5/7. In terms of biological role, catalyzes the specific phosphorylation of the 3-hydroxyl group of shikimic acid using ATP as a cosubstrate. The chain is Shikimate kinase from Psychromonas ingrahamii (strain DSM 17664 / CCUG 51855 / 37).